Here is a 229-residue protein sequence, read N- to C-terminus: Potassium/proton antiporter CemA (229 aa).

Helical transmembrane passes span 6 to 26, 107 to 127, and 189 to 209; these read AFIP…ISLC, ILHF…SFWG, and ILSG…KYWI.

Belongs to the CemA family.

It is found in the plastid. It localises to the chloroplast inner membrane. It catalyses the reaction K(+)(in) + H(+)(out) = K(+)(out) + H(+)(in). Its function is as follows. Contributes to K(+)/H(+) antiport activity by supporting proton efflux to control proton extrusion and homeostasis in chloroplasts in a light-dependent manner to modulate photosynthesis. Prevents excessive induction of non-photochemical quenching (NPQ) under continuous-light conditions. Indirectly promotes efficient inorganic carbon uptake into chloroplasts. This chain is Potassium/proton antiporter CemA, found in Arabis hirsuta (Hairy rock-cress).